The primary structure comprises 277 residues: Probable endonuclease 4 (277 aa).

Positions 70, 108, 143, 176, 179, 210, 223, 225, and 255 each coordinate Zn(2+).

The protein belongs to the AP endonuclease 2 family. Zn(2+) is required as a cofactor.

The enzyme catalyses Endonucleolytic cleavage to 5'-phosphooligonucleotide end-products.. Functionally, endonuclease IV plays a role in DNA repair. It cleaves phosphodiester bonds at apurinic or apyrimidinic (AP) sites, generating a 3'-hydroxyl group and a 5'-terminal sugar phosphate. The sequence is that of Probable endonuclease 4 from Mycoplasmopsis synoviae (strain 53) (Mycoplasma synoviae).